We begin with the raw amino-acid sequence, 360 residues long: UDP-N-acetylglucosamine--N-acetylmuramyl-(pentapeptide) pyrophosphoryl-undecaprenol N-acetylglucosamine transferase (360 aa).

Residues threonine 12–glycine 14, serine 198, and glutamine 289 contribute to the UDP-N-acetyl-alpha-D-glucosamine site.

It belongs to the glycosyltransferase 28 family. MurG subfamily.

The protein localises to the cell membrane. It catalyses the reaction Mur2Ac(oyl-L-Ala-gamma-D-Glu-L-Lys-D-Ala-D-Ala)-di-trans,octa-cis-undecaprenyl diphosphate + UDP-N-acetyl-alpha-D-glucosamine = beta-D-GlcNAc-(1-&gt;4)-Mur2Ac(oyl-L-Ala-gamma-D-Glu-L-Lys-D-Ala-D-Ala)-di-trans,octa-cis-undecaprenyl diphosphate + UDP + H(+). The protein operates within cell wall biogenesis; peptidoglycan biosynthesis. In terms of biological role, cell wall formation. Catalyzes the transfer of a GlcNAc subunit on undecaprenyl-pyrophosphoryl-MurNAc-pentapeptide (lipid intermediate I) to form undecaprenyl-pyrophosphoryl-MurNAc-(pentapeptide)GlcNAc (lipid intermediate II). This Streptococcus equi subsp. zooepidemicus (strain H70) protein is UDP-N-acetylglucosamine--N-acetylmuramyl-(pentapeptide) pyrophosphoryl-undecaprenol N-acetylglucosamine transferase.